The sequence spans 167 residues: UPF0336 protein MAP_4109 (167 aa).

The MaoC-like domain maps to 21 to 124 (GREQLRQFAL…RFGADIVVTK (104 aa)).

Belongs to the UPF0336 family.

This is UPF0336 protein MAP_4109 from Mycolicibacterium paratuberculosis (strain ATCC BAA-968 / K-10) (Mycobacterium paratuberculosis).